A 417-amino-acid chain; its full sequence is Guanine nucleotide-exchange factor SEC12 (417 aa).

Topologically, residues 1–388 (MGRRRGVELY…QLHLLPSRRS (388 aa)) are cytoplasmic. Tyr-10 is subject to 3'-nitrotyrosine. The interval 101–135 (KGSKAEKSGSKEQGPRQRKGAAPAEKKSGAEVHPE) is disordered. 2 stretches are compositionally biased toward basic and acidic residues: residues 103 to 115 (SKAE…EQGP) and 124 to 135 (AEKKSGAEVHPE). 3 WD repeats span residues 152 to 191 (STEP…KVLE), 194 to 232 (AHEG…TQLQ), and 298 to 337 (CGHE…RLYY). Residues 389 to 409 (VPVWLLLLLCVGLIIVTILLL) form a helical membrane-spanning segment. At 410–417 (QSAFPGFL) the chain is on the lumenal side.

As to quaternary structure, interacts with SAR1B (GDP-bound form). Interacts with MIA2; recruits PREB to endoplasmic reticulum exit sites. Interacts with CIDEB; facilitating loading of SCAP-SREBP into COPII vesicles.

It is found in the endoplasmic reticulum membrane. Its subcellular location is the nucleus. Functionally, guanine nucleotide exchange factor (GEF) that regulates the assembly of the coat protein complex II/COPII in endoplasmic reticulum (ER) to Golgi vesicle-mediated transport. Selectively activates SAR1A and SAR1B by promoting the exchange of guanosine diphosphate (GDP) for guanosine triphosphate (GTP) in these small GTPases. In their activated GTP-bound state, SAR1A and SAR1B insert into the membrane of the endoplasmic reticulum where they recruit the remainder of the coat protein complex II/COPII which is responsible for both the sorting of proteins and the deformation and budding of membranes into vesicles destined to the Golgi. In terms of biological role, was first identified based on its probable role in the regulation of pituitary gene transcription. Binds to the prolactin gene (PRL) promoter and seems to activate transcription. The sequence is that of Guanine nucleotide-exchange factor SEC12 from Rattus norvegicus (Rat).